The primary structure comprises 376 residues: DNA double-strand break repair protein Mre11 (376 aa).

The Mn(2+) site is built by aspartate 5, histidine 7, aspartate 46, and aspartate 81. Histidine 82 (proton donor) is an active-site residue. Mn(2+)-binding residues include histidine 159, histidine 189, and histidine 191.

The protein belongs to the MRE11/RAD32 family. As to quaternary structure, homodimer. Forms a heterotetramer composed of two Mre11 subunits and two Rad50 subunits. The cofactor is Mn(2+).

Its activity is regulated as follows. Nuclease activity is regulated by Rad50. Functionally, part of the Rad50/Mre11 complex, which is involved in the early steps of DNA double-strand break (DSB) repair. The complex may facilitate opening of the processed DNA ends to aid in the recruitment of HerA and NurA. Mre11 binds to DSB ends and has both double-stranded 3'-5' exonuclease activity and single-stranded endonuclease activity. In Thermoplasma acidophilum (strain ATCC 25905 / DSM 1728 / JCM 9062 / NBRC 15155 / AMRC-C165), this protein is DNA double-strand break repair protein Mre11.